Consider the following 62-residue polypeptide: Photosystem II reaction center protein Z (62 aa).

Transmembrane regions (helical) follow at residues 8–28 and 41–61; these read AVFA…VVFA and FSGT…NSLI.

It belongs to the PsbZ family. PSII is composed of 1 copy each of membrane proteins PsbA, PsbB, PsbC, PsbD, PsbE, PsbF, PsbH, PsbI, PsbJ, PsbK, PsbL, PsbM, PsbT, PsbY, PsbZ, Psb30/Ycf12, at least 3 peripheral proteins of the oxygen-evolving complex and a large number of cofactors. It forms dimeric complexes.

Its subcellular location is the plastid. It localises to the chloroplast thylakoid membrane. Its function is as follows. May control the interaction of photosystem II (PSII) cores with the light-harvesting antenna, regulates electron flow through the 2 photosystem reaction centers. PSII is a light-driven water plastoquinone oxidoreductase, using light energy to abstract electrons from H(2)O, generating a proton gradient subsequently used for ATP formation. The sequence is that of Photosystem II reaction center protein Z from Arabidopsis thaliana (Mouse-ear cress).